The primary structure comprises 350 residues: Holliday junction branch migration complex subunit RuvB (350 aa).

Positions 1–182 (MEDRIVTPLN…FGVLCPMDFY (182 aa)) are large ATPase domain (RuvB-L). ATP-binding positions include Leu21, Arg22, Gly63, Lys66, Thr67, Thr68, 129-131 (EDY), Arg172, Tyr182, and Arg219. Thr67 contacts Mg(2+). Residues 183–253 (DQEELSEIVV…TSKAALELLE (71 aa)) are small ATPAse domain (RuvB-S). The tract at residues 256 to 350 (KEGFDSIDNK…KQSSLFDGEV (95 aa)) is head domain (RuvB-H). DNA-binding residues include Arg311 and Arg316.

This sequence belongs to the RuvB family. Homohexamer. Forms an RuvA(8)-RuvB(12)-Holliday junction (HJ) complex. HJ DNA is sandwiched between 2 RuvA tetramers; dsDNA enters through RuvA and exits via RuvB. An RuvB hexamer assembles on each DNA strand where it exits the tetramer. Each RuvB hexamer is contacted by two RuvA subunits (via domain III) on 2 adjacent RuvB subunits; this complex drives branch migration. In the full resolvosome a probable DNA-RuvA(4)-RuvB(12)-RuvC(2) complex forms which resolves the HJ.

The protein resides in the cytoplasm. The enzyme catalyses ATP + H2O = ADP + phosphate + H(+). In terms of biological role, the RuvA-RuvB-RuvC complex processes Holliday junction (HJ) DNA during genetic recombination and DNA repair, while the RuvA-RuvB complex plays an important role in the rescue of blocked DNA replication forks via replication fork reversal (RFR). RuvA specifically binds to HJ cruciform DNA, conferring on it an open structure. The RuvB hexamer acts as an ATP-dependent pump, pulling dsDNA into and through the RuvAB complex. RuvB forms 2 homohexamers on either side of HJ DNA bound by 1 or 2 RuvA tetramers; 4 subunits per hexamer contact DNA at a time. Coordinated motions by a converter formed by DNA-disengaged RuvB subunits stimulates ATP hydrolysis and nucleotide exchange. Immobilization of the converter enables RuvB to convert the ATP-contained energy into a lever motion, pulling 2 nucleotides of DNA out of the RuvA tetramer per ATP hydrolyzed, thus driving DNA branch migration. The RuvB motors rotate together with the DNA substrate, which together with the progressing nucleotide cycle form the mechanistic basis for DNA recombination by continuous HJ branch migration. Branch migration allows RuvC to scan DNA until it finds its consensus sequence, where it cleaves and resolves cruciform DNA. The polypeptide is Holliday junction branch migration complex subunit RuvB (Clostridium kluyveri (strain NBRC 12016)).